The chain runs to 441 residues: MTSQYSNYSCPLNNIQVNVIGSSRTSDDHFLEQMLTKRKKTNISQDLHYTLLGLNPRDLYQISIKLARIDEKKYKFNGNFNGGDYYPHKNSEIPMEDTEEIVHLDGYQTGARWMKTGVYFPKIGISKEQPDKERCLLLESLHAYVPVLRFTTSSGISLEVTVWSQKFVTTMTSSNRSVKRREKRKLEETTGPSAKKTPEVIEFTQEAVVPEVYNAQQVYQMQNDTMISSDSKFCSPLAFQQDFTEEFGTISQLDAYVNVNVQSCSSSSLSSPAALQQDSTVSSDNDFDDKNSEEFDAVFEYIDQQFSNHDQNPMDQQSKSIDLNQTTWTSQSINNQSYLSTASSPAALNQDSFASEKSSIVRDKKNDENCLDEFDRVFNELDQQFTPTENQLQDLSNCTTWNQEPINNSIQSNQLNNNIAPALEENVEDDNAIFEHFFICN.

Positions 18–199 (NVIGSSRTSD…TGPSAKKTPE (182 aa)) form a DNA-binding region, T-box. Residues 268–289 (SLSSPAALQQDSTVSSDNDFDD) are disordered. Residues 273–284 (AALQQDSTVSSD) are compositionally biased toward polar residues.

The protein localises to the nucleus. The polypeptide is Putative T-box protein 32 (tbx-32) (Caenorhabditis elegans).